A 146-amino-acid polypeptide reads, in one-letter code: Hemoglobin cathodic subunit beta (146 aa).

The region spanning 2 to 146 is the Globin domain; it reads QWSSSERSTI…VVSALSRQYF (145 aa). Heme b is bound by residues His63 and His92.

The protein belongs to the globin family. As to quaternary structure, heterotetramer of two alpha chains and two beta chains. As to expression, red blood cells.

In terms of biological role, involved in oxygen transport from the gills to the various peripheral tissues. The chain is Hemoglobin cathodic subunit beta from Conger conger (Conger eel).